Consider the following 493-residue polypeptide: Ribose import ATP-binding protein RbsA (493 aa).

2 ABC transporter domains span residues 3–239 and 252–493; these read IKMK…VGRE and GRVV…TGGR. 35–42 contacts ATP; that stretch reads GENGAGKS.

The protein belongs to the ABC transporter superfamily. Ribose importer (TC 3.A.1.2.1) family. As to quaternary structure, the complex is composed of an ATP-binding protein (RbsA), two transmembrane proteins (RbsC) and a solute-binding protein (RbsB).

The protein resides in the cell membrane. The catalysed reaction is D-ribose(out) + ATP + H2O = D-ribose(in) + ADP + phosphate + H(+). Part of the ABC transporter complex RbsABC involved in ribose import. Responsible for energy coupling to the transport system. This is Ribose import ATP-binding protein RbsA from Bacillus licheniformis (strain ATCC 14580 / DSM 13 / JCM 2505 / CCUG 7422 / NBRC 12200 / NCIMB 9375 / NCTC 10341 / NRRL NRS-1264 / Gibson 46).